Reading from the N-terminus, the 327-residue chain is L-serine dehydratase/L-threonine deaminase (327 aa).

At K41 the chain carries N6-(pyridoxal phosphate)lysine.

Belongs to the serine/threonine dehydratase family. In terms of assembly, homodimer. Pyridoxal 5'-phosphate serves as cofactor.

It is found in the cytoplasm. The enzyme catalyses L-serine = pyruvate + NH4(+). It catalyses the reaction L-threonine = 2-oxobutanoate + NH4(+). The protein operates within carbohydrate biosynthesis; gluconeogenesis. Catalyzes the pyridoxal-phosphate-dependent dehydrative deamination of L-threonine and L-serine to ammonia and alpha-ketobutyrate and pyruvate, respectively. The chain is L-serine dehydratase/L-threonine deaminase (SDS) from Bos taurus (Bovine).